Consider the following 219-residue polypeptide: Beta-crystallin B2 (219 aa).

Alanine 2 bears the N-acetylalanine mark. Positions 2 to 16 (ASEHQMPASKQQPAS) are N-terminal arm. Beta/gamma crystallin 'Greek key' domains follow at residues 17 to 56 (PNIA…LVHS) and 57 to 101 (GPWV…RPIK). Residues 102–120 (VVRAPRQPLPTRQTKDSQE) form a connecting peptide region. 2 Beta/gamma crystallin 'Greek key' domains span residues 121–162 (HKIV…RVQS) and 163–205 (GTWV…RRIR). Residues 207–219 (MQWHQRGAYHPSN) form a C-terminal arm region.

The protein belongs to the beta/gamma-crystallin family. As to quaternary structure, homo/heterodimer, or complexes of higher-order. The structure of beta-crystallin oligomers seems to be stabilized through interactions between the N-terminal arms.

Its function is as follows. Crystallins are the dominant structural components of the vertebrate eye lens. The sequence is that of Beta-crystallin B2 (CRYBB2) from Gallus gallus (Chicken).